A 233-amino-acid polypeptide reads, in one-letter code: uncharacterized protein (233 aa).

The 69-residue stretch at 16 to 84 (KTLAKQVIER…TRGGTYFNDK (69 aa)) folds into the HTH gntR-type domain. The segment at residues 44–63 (EMELMDILHVSRPVLREALS) is a DNA-binding region (H-T-H motif).

This is an uncharacterized protein from Bacillus subtilis (strain 168).